A 147-amino-acid chain; its full sequence is UPF0306 protein YhbP (147 aa).

The protein belongs to the UPF0306 family.

In Shigella boydii serotype 4 (strain Sb227), this protein is UPF0306 protein YhbP.